Consider the following 286-residue polypeptide: Shikimate dehydrogenase (NADP(+)) (286 aa).

Shikimate contacts are provided by residues 19–21 (SFS) and Thr66. Lys70 acts as the Proton acceptor in catalysis. Asn91 and Asp107 together coordinate shikimate. Residues 129-133 (GSGGA) and Leu229 each bind NADP(+). Tyr231 provides a ligand contact to shikimate. Residue Gly252 participates in NADP(+) binding.

This sequence belongs to the shikimate dehydrogenase family. In terms of assembly, homodimer.

It catalyses the reaction shikimate + NADP(+) = 3-dehydroshikimate + NADPH + H(+). It functions in the pathway metabolic intermediate biosynthesis; chorismate biosynthesis; chorismate from D-erythrose 4-phosphate and phosphoenolpyruvate: step 4/7. Functionally, involved in the biosynthesis of the chorismate, which leads to the biosynthesis of aromatic amino acids. Catalyzes the reversible NADPH linked reduction of 3-dehydroshikimate (DHSA) to yield shikimate (SA). The sequence is that of Shikimate dehydrogenase (NADP(+)) from Prochlorococcus marinus (strain MIT 9301).